We begin with the raw amino-acid sequence, 698 residues long: SPX domain-containing membrane protein OsI_21475 (698 aa).

An SPX domain is found at 2–145 (VNFGKKLMAD…GYRFTDYYVT (144 aa)). The next 6 helical transmembrane spans lie at 248-268 (FMSLMLNLVNTFLYMVNTYII), 279-299 (LGAASTVCGVVIGSMAVAQIF), 316-336 (LIFSSIVLFLGNVCYAMAYDM), 339-357 (LTVLIIGRLLCGMGSARAV), 376-396 (AGFVSASALGMACGPALAGLL), and 412-432 (LPGWVMAVAWLLYLVWLWISF). Residues 467-495 (LLRDSSKKDEDDDEEVDDSEEGTHDSRKP) are disordered. Over residues 476–486 (EDDDEEVDDSE) the composition is skewed to acidic residues. A run of 5 helical transmembrane segments spans residues 514 to 534 (LLIYFMLKYAMEILLSESSVI), 545 to 565 (AVAIFLAILGLTVLPVNAVVG), 577 to 597 (LLMVSQITLLVGIIFSFKITS), 605 to 625 (VVSALVTFVSAEVLEGVNLSL), and 671 to 691 (LLNVTLLPSLVICAASIASTF).

It belongs to the major facilitator superfamily.

The protein localises to the membrane. The sequence is that of SPX domain-containing membrane protein OsI_21475 from Oryza sativa subsp. indica (Rice).